The chain runs to 305 residues: MKVAIAGYGDLTRYICEEFVQAGHELVILTRSFKPQIESPGISQAITDYTISSLKATLADCEVLISTIGDMSNAYTSVHHTLIQACQESPKCKRFIPAEFAVNIETYPDEPGFYYAIHEPVRETLRNQTNLEWTLVCIGWLADYFVPSKNRYIKDIDECHPINWKANKAVIPGTGNEPVDFTWARDVAKGLASLIQAPTGSWEPYTFMSGERSCWNDMAALIKEKYRPDMPIEHVSLHATANMIKAAKDEDTLILADYYLLSISQACAIPQDKAKAHKEKFFPHIHFRTLREGLSQFDEKPNSIM.

Belongs to the NmrA-type oxidoreductase family. Isoflavone reductase subfamily.

The catalysed reaction is L-pipecolate + O2 = L-1-piperideine-6-carboxylate + H2O2 + H(+). It participates in mycotoxin biosynthesis. Functionally, oxidoreductase; part of the gene cluster that mediates the biosynthesis of swainsonine (SW), a cytotoxic fungal alkaloid and a potential cancer therapy drug. Swainsonine production occurs via a multibranched pathway and is dispensable for fungal colonization of plants and infection of insect hosts. The first step of swainsonine biosynthesis is the production of the precursor pipecolic acid (PA) via conversion of L-lysine (Lys) to 1-piperideine-6-carboxylate (P6C) by the aminotransferase swnA, the latter being further reduced to PA by the reductase swnR. The PKS-NRPS hybrid synthetase swnK uptakes and condensates PA and malonyl-CoA with and without skipping of the ketoreductase (KR) domain in order to produce 3 intermediates, 1-oxoindolizidine, (1S)-1-hydroxyindolizin, and (1R)-1-hydroxyindolizine; with the transisomer (1S)-1-hydroxyindolizin being predominant. The terminal thioester reductase (TE) domain of swnK is involved in reduction of the thioester bond to release the intermediate aldehydes. The oxidoreductase swnN could contribute to the reduction of 1-oxoindolizidine to (1S)-1-hydroxyindolizin and (1R)-1-hydroxyindolizine, contributing to the major route of SW production. The dioxygenase swnH2 would be responsible for the oxidization of (1R)-1-hydroxyindolizine into (1R,2S)-1,2-dihydroxyindolizine and of (1S)-1-hydroxyindolizin to yield both (1R,2S)-1,2-dihydroxyindolizine and (1S,2S)-1,2-dihydroxyindolizine. The dioxygenase swnH1 then performs the conversion of the 1,2-dihydroxyindolizine epimers to SW. This chain is Oxidoreductase swnR, found in Arthroderma benhamiae (strain ATCC MYA-4681 / CBS 112371) (Trichophyton mentagrophytes).